Reading from the N-terminus, the 254-residue chain is Nickel import ATP-binding protein NikO (254 aa).

One can recognise an ABC transporter domain in the interval 5 to 246 (FELQGVQFAY…TALLRRARLL (242 aa)). ATP is bound at residue 37–44 (GANGSGKS).

This sequence belongs to the ABC transporter superfamily. In terms of assembly, forms an energy-coupling factor (ECF) transporter complex composed of an ATP-binding protein (A component, NikO), a transmembrane protein (T component, NikQ) and a fused possible substrate-capture protein (S component, NikMN) of unknown stoichimetry.

It is found in the cell inner membrane. The enzyme catalyses Ni(2+)(out) + ATP + H2O = Ni(2+)(in) + ADP + phosphate + H(+). In terms of biological role, part of the energy-coupling factor (ECF) transporter complex NikMNQO involved in nickel import. The complex confers nickel uptake upon expression in E.coli. Shows very low activity with cobalt. Presumably responsible for energy coupling to the transport system. The polypeptide is Nickel import ATP-binding protein NikO (Rhodobacter capsulatus (strain ATCC BAA-309 / NBRC 16581 / SB1003)).